A 166-amino-acid chain; its full sequence is Small ribosomal subunit protein uS5 (166 aa).

The region spanning 12 to 75 (YIEKLVQVNR…EAARRNMIQV (64 aa)) is the S5 DRBM domain.

It belongs to the universal ribosomal protein uS5 family. As to quaternary structure, part of the 30S ribosomal subunit. Contacts proteins S4 and S8.

Functionally, with S4 and S12 plays an important role in translational accuracy. In terms of biological role, located at the back of the 30S subunit body where it stabilizes the conformation of the head with respect to the body. The chain is Small ribosomal subunit protein uS5 from Pseudomonas putida (strain ATCC 700007 / DSM 6899 / JCM 31910 / BCRC 17059 / LMG 24140 / F1).